A 233-amino-acid chain; its full sequence is Segregation and condensation protein A (233 aa).

This sequence belongs to the ScpA family. In terms of assembly, component of a cohesin-like complex composed of ScpA, ScpB and the Smc homodimer, in which ScpA and ScpB bind to the head domain of Smc. The presence of the three proteins is required for the association of the complex with DNA.

Its subcellular location is the cytoplasm. In terms of biological role, participates in chromosomal partition during cell division. May act via the formation of a condensin-like complex containing Smc and ScpB that pull DNA away from mid-cell into both cell halves. The chain is Segregation and condensation protein A from Streptococcus pyogenes serotype M1.